The chain runs to 346 residues: Biotin synthase (346 aa).

A Radical SAM core domain is found at 38 to 256; it reads RQVQVSTLLS…IAVARIMMPT (219 aa). Cys53, Cys57, and Cys60 together coordinate [4Fe-4S] cluster. The [2Fe-2S] cluster site is built by Cys97, Cys128, Cys188, and Arg260.

It belongs to the radical SAM superfamily. Biotin synthase family. As to quaternary structure, homodimer. The cofactor is [4Fe-4S] cluster. [2Fe-2S] cluster is required as a cofactor.

The enzyme catalyses (4R,5S)-dethiobiotin + (sulfur carrier)-SH + 2 reduced [2Fe-2S]-[ferredoxin] + 2 S-adenosyl-L-methionine = (sulfur carrier)-H + biotin + 2 5'-deoxyadenosine + 2 L-methionine + 2 oxidized [2Fe-2S]-[ferredoxin]. The protein operates within cofactor biosynthesis; biotin biosynthesis; biotin from 7,8-diaminononanoate: step 2/2. Functionally, catalyzes the conversion of dethiobiotin (DTB) to biotin by the insertion of a sulfur atom into dethiobiotin via a radical-based mechanism. The sequence is that of Biotin synthase from Pseudescherichia vulneris (Escherichia vulneris).